We begin with the raw amino-acid sequence, 190 residues long: Putative manganese efflux pump MntP (190 aa).

6 consecutive transmembrane segments (helical) span residues 3 to 23 (FLQI…CSVV), 37 to 57 (LVLA…GWVI), 72 to 88 (HWIA…KMIW), 111 to 131 (IILG…LAFV), 138 to 158 (VALS…WIGH), and 164 to 184 (FGKW…ANIV).

The protein belongs to the MntP (TC 9.B.29) family.

The protein localises to the cell membrane. Its function is as follows. Probably functions as a manganese efflux pump. The chain is Putative manganese efflux pump MntP from Corynebacterium glutamicum (strain R).